A 172-amino-acid chain; its full sequence is Translationally-controlled tumor protein homolog (172 aa).

The 172-residue stretch at 1 to 172 (MIIYKDTVTE…FKDGLISEKC (172 aa)) folds into the TCTP domain.

Belongs to the TCTP family.

The protein resides in the cytoplasm. Its function is as follows. Involved in calcium binding and microtubule stabilization. This Xenopus tropicalis (Western clawed frog) protein is Translationally-controlled tumor protein homolog (tpt1).